The primary structure comprises 143 residues: Large ribosomal subunit protein uL13 (143 aa).

This sequence belongs to the universal ribosomal protein uL13 family. As to quaternary structure, part of the 50S ribosomal subunit.

Functionally, this protein is one of the early assembly proteins of the 50S ribosomal subunit, although it is not seen to bind rRNA by itself. It is important during the early stages of 50S assembly. This Methylacidiphilum infernorum (isolate V4) (Methylokorus infernorum (strain V4)) protein is Large ribosomal subunit protein uL13.